The chain runs to 124 residues: Probable cytochrome b5 1 (124 aa).

Positions 3-79 (VKYFEPEEIV…LEEMYIGDLK (77 aa)) constitute a Cytochrome b5 heme-binding domain. Residues His-38 and His-62 each coordinate heme. The chain crosses the membrane as a helical span at residues 100 to 120 (PPLPLLIALIVLPAIAVIVFV).

This sequence belongs to the cytochrome b5 family.

The protein localises to the endoplasmic reticulum membrane. It localises to the microsome membrane. In terms of biological role, membrane bound hemoprotein which function as an electron carrier for several membrane bound oxygenases. In Schizosaccharomyces pombe (strain 972 / ATCC 24843) (Fission yeast), this protein is Probable cytochrome b5 1.